The sequence spans 82 residues: UPF0337 protein PP_2059 (82 aa).

It belongs to the UPF0337 (CsbD) family.

The protein is UPF0337 protein PP_2059 of Pseudomonas putida (strain ATCC 47054 / DSM 6125 / CFBP 8728 / NCIMB 11950 / KT2440).